The following is a 397-amino-acid chain: Acetate kinase (397 aa).

Asparagine 7 lines the Mg(2+) pocket. Residue lysine 14 participates in ATP binding. Arginine 91 lines the substrate pocket. The Proton donor/acceptor role is filled by aspartate 148. Residues 208-212 (HLGNG), 283-285 (DFR), and 331-335 (GLGEN) each bind ATP. Glutamate 383 is a Mg(2+) binding site.

The protein belongs to the acetokinase family. In terms of assembly, homodimer. Mg(2+) is required as a cofactor. Requires Mn(2+) as cofactor.

It localises to the cytoplasm. The enzyme catalyses acetate + ATP = acetyl phosphate + ADP. It functions in the pathway metabolic intermediate biosynthesis; acetyl-CoA biosynthesis; acetyl-CoA from acetate: step 1/2. Functionally, catalyzes the formation of acetyl phosphate from acetate and ATP. Can also catalyze the reverse reaction. This is Acetate kinase from Heliobacterium modesticaldum (strain ATCC 51547 / Ice1).